The sequence spans 156 residues: D-aminoacyl-tRNA deacylase (156 aa).

The short motif at 139-140 (GP) is the Gly-cisPro motif, important for rejection of L-amino acids element.

Belongs to the DTD family. Homodimer.

The protein localises to the cytoplasm. The enzyme catalyses glycyl-tRNA(Ala) + H2O = tRNA(Ala) + glycine + H(+). The catalysed reaction is a D-aminoacyl-tRNA + H2O = a tRNA + a D-alpha-amino acid + H(+). Its function is as follows. An aminoacyl-tRNA editing enzyme that deacylates mischarged D-aminoacyl-tRNAs. Also deacylates mischarged glycyl-tRNA(Ala), protecting cells against glycine mischarging by AlaRS. Acts via tRNA-based rather than protein-based catalysis; rejects L-amino acids rather than detecting D-amino acids in the active site. By recycling D-aminoacyl-tRNA to D-amino acids and free tRNA molecules, this enzyme counteracts the toxicity associated with the formation of D-aminoacyl-tRNA entities in vivo and helps enforce protein L-homochirality. The polypeptide is D-aminoacyl-tRNA deacylase (Marinobacter nauticus (strain ATCC 700491 / DSM 11845 / VT8) (Marinobacter aquaeolei)).